The chain runs to 415 residues: Putative competence-damage inducible protein (415 aa).

It belongs to the CinA family.

This is Putative competence-damage inducible protein from Limosilactobacillus reuteri (strain DSM 20016) (Lactobacillus reuteri).